Reading from the N-terminus, the 82-residue chain is Consomatin Ar1 (82 aa).

An N-terminal signal peptide occupies residues 1 to 22 (MQTAYWVVVMMMMVWVTAPVSE). The propeptide occupies 23–60 (GGKLSDVIWGLVPDDLTPQIILQILNASRHAYRRVRPR). A disulfide bond links cysteine 64 and cysteine 69. Tryptophan 66 carries the post-translational modification D-tryptophan. Proline 70, proline 71, and proline 73 each carry 4-hydroxyproline. The propeptide occupies 74–82 (QWIHPLVKR).

Belongs to the conotoxin C superfamily. Consomatin family. Expressed by the venom duct.

It localises to the secreted. In terms of biological role, moderately activates human somatostatin receptors (SSTR) with a preferential activation of SSTR1 and SSTR4. In vivo, does not cause behavioral changes in mice within a few minutes of intracranial injection, but causes a progressive loss of movement thereafter. Four to five hours after injection, mice recover, even with the highest dose tested. Shows antinociception and antihyperalgesia activities in two mouse models of acute pain, most probably by acting outside the central nervous system. This is Consomatin Ar1 from Conus arenatus (Sand-dusted cone).